A 293-amino-acid chain; its full sequence is Elongation factor Ts (293 aa).

The interval 81 to 84 (TDFV) is involved in Mg(2+) ion dislocation from EF-Tu.

The protein belongs to the EF-Ts family.

It localises to the cytoplasm. In terms of biological role, associates with the EF-Tu.GDP complex and induces the exchange of GDP to GTP. It remains bound to the aminoacyl-tRNA.EF-Tu.GTP complex up to the GTP hydrolysis stage on the ribosome. This chain is Elongation factor Ts, found in Methylococcus capsulatus (strain ATCC 33009 / NCIMB 11132 / Bath).